The sequence spans 185 residues: Threonylcarbamoyl-AMP synthase (185 aa).

One can recognise a YrdC-like domain in the interval 3–185 (EQAPAEVKQV…IDAISGKILR (183 aa)).

The protein belongs to the SUA5 family. TsaC subfamily.

The protein resides in the cytoplasm. The catalysed reaction is L-threonine + hydrogencarbonate + ATP = L-threonylcarbamoyladenylate + diphosphate + H2O. Required for the formation of a threonylcarbamoyl group on adenosine at position 37 (t(6)A37) in tRNAs that read codons beginning with adenine. Catalyzes the conversion of L-threonine, HCO(3)(-)/CO(2) and ATP to give threonylcarbamoyl-AMP (TC-AMP) as the acyladenylate intermediate, with the release of diphosphate. The chain is Threonylcarbamoyl-AMP synthase from Shewanella woodyi (strain ATCC 51908 / MS32).